The primary structure comprises 189 residues: Elongation factor P (189 aa).

It belongs to the elongation factor P family.

The protein localises to the cytoplasm. Its pathway is protein biosynthesis; polypeptide chain elongation. Involved in peptide bond synthesis. Stimulates efficient translation and peptide-bond synthesis on native or reconstituted 70S ribosomes in vitro. Probably functions indirectly by altering the affinity of the ribosome for aminoacyl-tRNA, thus increasing their reactivity as acceptors for peptidyl transferase. The chain is Elongation factor P from Pseudomonas putida (strain GB-1).